The following is a 5065-amino-acid chain: Dynein heavy chain-like protein 1 (5065 aa).

The segment at 1-1957 (MELEKTHLIN…IIKMADATFE (1957 aa)) is stem. The stretch at 1677–1705 (QMEGFQKQLDRLSDSLSKIQKALGEYLEK) forms a coiled coil. The segment at 1958 to 2179 (YGYEYLGMCE…LRSLKSVLNS (222 aa)) is AAA 1. 1996-2003 (GPAGTGKT) lines the ATP pocket. The interval 2203 to 2223 (FNETLDNNNNNDNNNERKTTT) is disordered. The segment covering 2204-2215 (NETLDNNNNNDN) has biased composition (low complexity). AAA stretches follow at residues 2281-2632 (NEIH…YEYI), 2751-3004 (DVDR…WKLA), and 3097-3367 (IFNE…GNRY). Residue 2319 to 2326 (GDVGTGKS) coordinates ATP. The disordered stretch occupies residues 2507–2529 (EKNQNGNENGNENEKKNINIINN). ATP-binding positions include 2790 to 2797 (GPPGSGKT) and 3135 to 3142 (GASGAGKT). The tract at residues 3386–3701 (IDEKKEEVSS…ETFINLEEAS (316 aa)) is stalk. Coiled-coil stretches lie at residues 3388 to 3466 (EKKE…LDEQ) and 3970 to 3997 (TMEK…EVEN). 2 AAA regions span residues 3754–3983 (LSRP…EASK) and 4289–4507 (FNKI…VVDS). The span at 4686 to 4705 (KDKNKDEDKNKNKENDDNNK) shows a compositional bias: basic and acidic residues. The tract at residues 4686–4727 (KDKNKDEDKNKNKENDDNNKKHIGNNKLVISSSERTESETSE) is disordered.

The protein belongs to the dynein heavy chain family. In terms of assembly, consists of at least two heavy chains and a number of intermediate and light chains.

It localises to the cytoplasm. The protein resides in the cytoskeleton. Its function is as follows. Acts as a motor for the intracellular retrograde motility of vesicles and organelles along microtubules. Dynein has ATPase activity; the force-producing power stroke is thought to occur on release of ADP. The protein is Dynein heavy chain-like protein 1 of Plasmodium falciparum (isolate 3D7).